A 253-amino-acid chain; its full sequence is tRNA pseudouridine synthase A (253 aa).

D52 serves as the catalytic Nucleophile. A substrate-binding site is contributed by Y110.

It belongs to the tRNA pseudouridine synthase TruA family. In terms of assembly, homodimer.

The catalysed reaction is uridine(38/39/40) in tRNA = pseudouridine(38/39/40) in tRNA. Its function is as follows. Formation of pseudouridine at positions 38, 39 and 40 in the anticodon stem and loop of transfer RNAs. The chain is tRNA pseudouridine synthase A from Thermus thermophilus (strain ATCC BAA-163 / DSM 7039 / HB27).